Reading from the N-terminus, the 395-residue chain is Succinyl-diaminopimelate desuccinylase (395 aa).

His-74 serves as a coordination point for Zn(2+). Residue Asp-76 is part of the active site. Residue Asp-107 coordinates Zn(2+). Glu-141 serves as the catalytic Proton acceptor. Zn(2+) is bound by residues Glu-142, Glu-170, and His-368.

It belongs to the peptidase M20A family. DapE subfamily. In terms of assembly, homodimer. It depends on Zn(2+) as a cofactor. Co(2+) serves as cofactor.

The enzyme catalyses N-succinyl-(2S,6S)-2,6-diaminopimelate + H2O = (2S,6S)-2,6-diaminopimelate + succinate. The protein operates within amino-acid biosynthesis; L-lysine biosynthesis via DAP pathway; LL-2,6-diaminopimelate from (S)-tetrahydrodipicolinate (succinylase route): step 3/3. Functionally, catalyzes the hydrolysis of N-succinyl-L,L-diaminopimelic acid (SDAP), forming succinate and LL-2,6-diaminopimelate (DAP), an intermediate involved in the bacterial biosynthesis of lysine and meso-diaminopimelic acid, an essential component of bacterial cell walls. The polypeptide is Succinyl-diaminopimelate desuccinylase (Brucella canis (strain ATCC 23365 / NCTC 10854 / RM-666)).